A 212-amino-acid chain; its full sequence is Probable GTP-binding protein EngB (212 aa).

An EngB-type G domain is found at 25–199 (FGYEVAFAGR…WAKLDEWMEY (175 aa)). GTP-binding positions include 33-40 (GRSNAGKS), 60-64 (GRTQL), 78-81 (DLPG), 145-148 (TKSD), and 178-180 (FSS). Positions 40 and 62 each coordinate Mg(2+).

The protein belongs to the TRAFAC class TrmE-Era-EngA-EngB-Septin-like GTPase superfamily. EngB GTPase family. Mg(2+) is required as a cofactor.

Its function is as follows. Necessary for normal cell division and for the maintenance of normal septation. This chain is Probable GTP-binding protein EngB, found in Hydrogenovibrio crunogenus (strain DSM 25203 / XCL-2) (Thiomicrospira crunogena).